We begin with the raw amino-acid sequence, 406 residues long: Phosphopentomutase (406 aa).

D10, D305, H310, D346, H347, and H358 together coordinate Mn(2+).

The protein belongs to the phosphopentomutase family. The cofactor is Mn(2+).

Its subcellular location is the cytoplasm. The enzyme catalyses 2-deoxy-alpha-D-ribose 1-phosphate = 2-deoxy-D-ribose 5-phosphate. It catalyses the reaction alpha-D-ribose 1-phosphate = D-ribose 5-phosphate. It participates in carbohydrate degradation; 2-deoxy-D-ribose 1-phosphate degradation; D-glyceraldehyde 3-phosphate and acetaldehyde from 2-deoxy-alpha-D-ribose 1-phosphate: step 1/2. Functionally, isomerase that catalyzes the conversion of deoxy-ribose 1-phosphate (dRib-1-P) and ribose 1-phosphate (Rib-1-P) to deoxy-ribose 5-phosphate (dRib-5-P) and ribose 5-phosphate (Rib-5-P), respectively. The sequence is that of Phosphopentomutase from Aliivibrio salmonicida (strain LFI1238) (Vibrio salmonicida (strain LFI1238)).